A 532-amino-acid polypeptide reads, in one-letter code: Membrane protein insertase YidC (532 aa).

5 consecutive transmembrane segments (helical) span residues 7 to 27, 336 to 356, 413 to 433, 450 to 470, and 492 to 512; these read FFIF…QSQM, LTIL…ITFI, GGFL…YMLI, LSSQ…MFFI, and PVIF…YYII.

The protein belongs to the OXA1/ALB3/YidC family. Type 1 subfamily. In terms of assembly, interacts with the Sec translocase complex via SecD. Specifically interacts with transmembrane segments of nascent integral membrane proteins during membrane integration.

It is found in the cell membrane. In terms of biological role, required for the insertion and/or proper folding and/or complex formation of integral membrane proteins into the membrane. Involved in integration of membrane proteins that insert both dependently and independently of the Sec translocase complex, as well as at least some lipoproteins. Aids folding of multispanning membrane proteins. The chain is Membrane protein insertase YidC from Buchnera aphidicola subsp. Acyrthosiphon pisum (strain 5A).